Consider the following 776-residue polypeptide: Bifunctional lysine-specific demethylase and histidyl-hydroxylase NO66 (776 aa).

3 disordered regions span residues 1 to 57 (MGKK…EPKF), 87 to 126 (EQNG…AHKH), and 165 to 288 (ILDE…DDEG). Composition is skewed to basic and acidic residues over residues 47-57 (HYKEPSKEPKF) and 98-119 (EISP…DGVA). Over residues 166–204 (LDEEVEDEEIDEEEFEDEEEVEDEEGMDEDETEIDESEM) the composition is skewed to acidic residues. A compositionally biased stretch (basic and acidic residues) spans 206–216 (VDPKDIERCIE). The segment covering 217–288 (FEDVDDEDEM…EMDADSDDEG (72 aa)) has biased composition (acidic residues). Residues 425–569 (QLVNPQTFDD…NLMEKVIPEA (145 aa)) enclose the JmjC domain. The Fe cation site is built by His468, Asp470, and His535.

Belongs to the ROX family. NO66 subfamily. Fe(2+) serves as cofactor.

The protein resides in the nucleus. It catalyses the reaction N(6),N(6)-dimethyl-L-lysyl(36)-[histone H3] + 2 2-oxoglutarate + 2 O2 = L-lysyl(36)-[histone H3] + 2 formaldehyde + 2 succinate + 2 CO2. Its function is as follows. Oxygenase that can act as both a histone lysine demethylase and a ribosomal histidine hydroxylase. Specifically demethylates 'Lys-4' (H3K4me) and 'Lys-36' (H3K36me) of histone H3, thereby playing a central role in histone code. This Caenorhabditis briggsae protein is Bifunctional lysine-specific demethylase and histidyl-hydroxylase NO66 (jmjc-1).